The sequence spans 737 residues: SANT and BTB domain regulator of class switch recombination (737 aa).

In terms of domain architecture, SANT spans 21–59; the sequence is DMILYPLIGIPQTINWETVARLVPGLTPKECVKRFDELK. One can recognise a BTB domain in the interval 147–255; sequence MVIHVCDEAK…QCIQYCHKNM (109 aa). Residues 555-576 show a composition bias toward acidic residues; it reads SEEEEYTTGSEVTEDEVGDEEE. Residues 555–618 are disordered; that stretch reads SEEEEYTTGS…TLEKSTSRDV (64 aa). Positions 580 to 595 are enriched in basic residues; the sequence is KQRKKEKPKKFTKPPK. Positions 604–615 are enriched in basic and acidic residues; the sequence is QKKEKTLEKSTS.

The protein belongs to the KIAA1841 family. As to quaternary structure, homodimer. Interacts (via the BTB domain) with HDAC1 and NCOR2.

Negatively regulates class switch recombination or isotype switching in splenic B-cells. In Rattus norvegicus (Rat), this protein is SANT and BTB domain regulator of class switch recombination.